Consider the following 645-residue polypeptide: Lipase 1 (645 aa).

A signal peptide spans 1 to 24 (MKRSFIFAPGMLALSISAISNAHA). Residue serine 34 is the Nucleophile of the active site. Active-site residues include aspartate 327 and histidine 330. One can recognise an Autotransporter domain in the interval 383–645 (NEQGKLGVFG…SFSLGVNASF (263 aa)).

Belongs to the 'GDSL' lipolytic enzyme family.

It is found in the secreted. It carries out the reaction a triacylglycerol + H2O = a diacylglycerol + a fatty acid + H(+). The protein is Lipase 1 (lip-1) of Photorhabdus luminescens (Xenorhabdus luminescens).